Reading from the N-terminus, the 105-residue chain is Small ribosomal subunit protein uS10 (105 aa).

The protein belongs to the universal ribosomal protein uS10 family. As to quaternary structure, part of the 30S ribosomal subunit.

Involved in the binding of tRNA to the ribosomes. This Francisella tularensis subsp. mediasiatica (strain FSC147) protein is Small ribosomal subunit protein uS10.